A 78-amino-acid chain; its full sequence is Beta-defensin 105A (78 aa).

An N-terminal signal peptide occupies residues 1 to 27 (MALIKKTFFFLFAMFFILVQLSSGCQA). Intrachain disulfides connect Cys43-Cys74, Cys53-Cys67, and Cys57-Cys73.

Belongs to the beta-defensin family.

It is found in the secreted. Its function is as follows. Has antimicrobial activity. This chain is Beta-defensin 105A (DEFB105A), found in Pan troglodytes (Chimpanzee).